An 860-amino-acid polypeptide reads, in one-letter code: Protein translocase subunit SecA (860 aa).

ATP is bound by residues glutamine 87, 105 to 109 (GEGKT), and aspartate 514. Positions 846, 848, 857, and 858 each coordinate Zn(2+).

This sequence belongs to the SecA family. In terms of assembly, monomer and homodimer. Part of the essential Sec protein translocation apparatus which comprises SecA, SecYEG and auxiliary proteins SecDF. Other proteins may also be involved. Requires Zn(2+) as cofactor.

It is found in the cell membrane. Its subcellular location is the cytoplasm. It carries out the reaction ATP + H2O + cellular proteinSide 1 = ADP + phosphate + cellular proteinSide 2.. Part of the Sec protein translocase complex. Interacts with the SecYEG preprotein conducting channel. Has a central role in coupling the hydrolysis of ATP to the transfer of proteins into and across the cell membrane, serving as an ATP-driven molecular motor driving the stepwise translocation of polypeptide chains across the membrane. The sequence is that of Protein translocase subunit SecA from Endomicrobium trichonymphae.